The chain runs to 60 residues: MDHRLLEIIACPVCNGKLYYSQDKQELICKLDSLAFPLRDGIPVLLETEARPLALEESHS.

Belongs to the UPF0434 family.

This chain is UPF0434 protein KPN78578_09190, found in Klebsiella pneumoniae subsp. pneumoniae (strain ATCC 700721 / MGH 78578).